The primary structure comprises 222 residues: 2-C-methyl-D-erythritol 4-phosphate cytidylyltransferase (222 aa).

It belongs to the IspD/TarI cytidylyltransferase family. IspD subfamily.

The catalysed reaction is 2-C-methyl-D-erythritol 4-phosphate + CTP + H(+) = 4-CDP-2-C-methyl-D-erythritol + diphosphate. The protein operates within isoprenoid biosynthesis; isopentenyl diphosphate biosynthesis via DXP pathway; isopentenyl diphosphate from 1-deoxy-D-xylulose 5-phosphate: step 2/6. Catalyzes the formation of 4-diphosphocytidyl-2-C-methyl-D-erythritol from CTP and 2-C-methyl-D-erythritol 4-phosphate (MEP). The polypeptide is 2-C-methyl-D-erythritol 4-phosphate cytidylyltransferase (Thermotoga petrophila (strain ATCC BAA-488 / DSM 13995 / JCM 10881 / RKU-1)).